Reading from the N-terminus, the 202-residue chain is Superoxide dismutase [Mn] (202 aa).

H27 contributes to the Mn(2+) binding site. Residues T34 and T70 each carry the phosphothreonine modification. H82, D164, and H168 together coordinate Mn(2+).

It belongs to the iron/manganese superoxide dismutase family. As to quaternary structure, homodimer. Requires Mn(2+) as cofactor.

The catalysed reaction is 2 superoxide + 2 H(+) = H2O2 + O2. In terms of biological role, destroys superoxide anion radicals which are normally produced within the cells and which are toxic to biological systems. The sequence is that of Superoxide dismutase [Mn] (sodA) from Halalkalibacterium halodurans (strain ATCC BAA-125 / DSM 18197 / FERM 7344 / JCM 9153 / C-125) (Bacillus halodurans).